We begin with the raw amino-acid sequence, 296 residues long: Diaminopimelate epimerase (296 aa).

Residues asparagine 17, glutamine 49, and asparagine 69 each contribute to the substrate site. Cysteine 78 acts as the Proton donor in catalysis. Residues glycine 79 to asparagine 80, asparagine 171, asparagine 205, and glutamate 223 to arginine 224 contribute to the substrate site. Residue cysteine 232 is the Proton acceptor of the active site. Glycine 233–threonine 234 is a substrate binding site.

The protein belongs to the diaminopimelate epimerase family. In terms of assembly, homodimer.

The protein resides in the cytoplasm. The catalysed reaction is (2S,6S)-2,6-diaminopimelate = meso-2,6-diaminopimelate. It participates in amino-acid biosynthesis; L-lysine biosynthesis via DAP pathway; DL-2,6-diaminopimelate from LL-2,6-diaminopimelate: step 1/1. Catalyzes the stereoinversion of LL-2,6-diaminopimelate (L,L-DAP) to meso-diaminopimelate (meso-DAP), a precursor of L-lysine and an essential component of the bacterial peptidoglycan. This chain is Diaminopimelate epimerase, found in Methylorubrum extorquens (strain PA1) (Methylobacterium extorquens).